A 216-amino-acid polypeptide reads, in one-letter code: Imidazoleglycerol-phosphate dehydratase (216 aa).

Belongs to the imidazoleglycerol-phosphate dehydratase family.

It is found in the cytoplasm. The enzyme catalyses D-erythro-1-(imidazol-4-yl)glycerol 3-phosphate = 3-(imidazol-4-yl)-2-oxopropyl phosphate + H2O. Its pathway is amino-acid biosynthesis; L-histidine biosynthesis; L-histidine from 5-phospho-alpha-D-ribose 1-diphosphate: step 6/9. This Nocardia farcinica (strain IFM 10152) protein is Imidazoleglycerol-phosphate dehydratase.